A 404-amino-acid chain; its full sequence is Glucose-1-phosphate adenylyltransferase (404 aa).

Residues Tyr99, Gly164, 179 to 180 (EK), and Ser197 each bind alpha-D-glucose 1-phosphate.

It belongs to the bacterial/plant glucose-1-phosphate adenylyltransferase family.

The catalysed reaction is alpha-D-glucose 1-phosphate + ATP + H(+) = ADP-alpha-D-glucose + diphosphate. It functions in the pathway capsule biogenesis; capsule polysaccharide biosynthesis. It participates in glycan biosynthesis; glycogen biosynthesis. Functionally, involved in the biosynthesis of ADP-glucose, a building block, required in the biosynthesis of maltose-1-phosphate (M1P) and in the elongation reactions to produce linear alpha-1,4-glucans. Catalyzes the reaction between ATP and alpha-D-glucose 1-phosphate (G1P) to produce pyrophosphate and ADP-Glc. This chain is Glucose-1-phosphate adenylyltransferase, found in Mycobacterium bovis (strain ATCC BAA-935 / AF2122/97).